We begin with the raw amino-acid sequence, 126 residues long: uncharacterized protein (126 aa).

An HTH hxlR-type domain is found at 20–118 (CPSREVLKHV…WIELNLPEVL (99 aa)).

This is an uncharacterized protein from Escherichia coli (strain K12).